We begin with the raw amino-acid sequence, 2348 residues long: Transcription factor HIVEP3 (2348 aa).

Residues 1–105 (MDPDQSIKGT…AFMSPGKPEH (105 aa)) are disordered. The span at 27–72 (IQTSVSSSAPYPGSGTTAPSESATQELLATQPFSGPSQEKTGQQQK) shows a compositional bias: polar residues. 2 consecutive C2H2-type zinc fingers follow at residues 185–207 (YICQYCSRPCAKPSVLQKHIRSH) and 213–235 (YPCGPCGFSFKTKSNLYKHRKSH). The interval 185 to 235 (YICQYCSRPCAKPSVLQKHIRSHTGERPYPCGPCGFSFKTKSNLYKHRKSH) is ZAS1. The no DNA binding activity or transactivation activity, but complete prevention of TRAF-dependent NF-Kappa-B activation; associates with TRAF2 and JUN stretch occupies residues 204–1055 (IRSHTGERPY…KGKQESSEEP (852 aa)). 3 disordered regions span residues 239–401 (IKAG…SPPN), 475–532 (DSVK…PLLR), and 561–628 (ADPE…TKKG). The acidic 1 stretch occupies residues 257–280 (EMERIPGEEFEEPTEGESTDSEEE). Over residues 264 to 281 (EEFEEPTEGESTDSEEET) the composition is skewed to acidic residues. Residues 298-323 (PLLSSSLYSSGSHGSSQERCSLSQSS) show a composition bias toward low complexity. Positions 338-352 (SSEHPLSHKPEDTHT) are enriched in basic and acidic residues. Composition is skewed to polar residues over residues 372 to 401 (TFLSPGSKGSTESGYFSRSESAEQQVSPPN) and 485 to 495 (TRRSSVESPKS). Composition is skewed to low complexity over residues 513 to 527 (QSLLSLQHPPSSTHP) and 589 to 605 (PLGGEYSSEEPGPSSKD). Positions 606–623 (PTSKPSDEPEPKESDLTK) are enriched in basic and acidic residues. The CCHC HIVEP-type zinc-finger motif lies at 633–663 (GANYECTICGARYKKRDNYEAHKKYYCSELQ). Disordered stretches follow at residues 692 to 1098 (KLGA…PPYT), 1229 to 1274 (LPPV…TSAP), 1386 to 1427 (EGCS…KADE), 1441 to 1555 (STED…EGTD), and 1654 to 1694 (EVHL…GEPA). Over residues 736–749 (STKSPAEASKSAPS) the composition is skewed to low complexity. The segment at 844 to 865 (EEPDRPDTEPEPPPKEPEKTEE) is acidic 2. The segment covering 845-865 (EPDRPDTEPEPPPKEPEKTEE) has biased composition (basic and acidic residues). A Nuclear localization signal motif is present at residues 885–891 (PKKKRLR). A compositionally biased stretch (low complexity) spans 893–929 (AEMAQSSGESSFESSVPLSRSPSQESSISLSGSSRSA). Over residues 930–939 (SFDREDHGKA) the composition is skewed to basic and acidic residues. Composition is skewed to polar residues over residues 975-985 (SEQSPNVPHSS), 1062-1073 (TKSSVPQISVGT), and 1247-1256 (SSSTEYSSDI). A coiled-coil region spans residues 1409–1433 (METQQQKRVKEEEASKADEKLELVS). 3 stretches are compositionally biased toward basic and acidic residues: residues 1416–1427 (RVKEEEASKADE), 1442–1452 (TEDRKKTEKPH), and 1518–1527 (VKKEDPKEQT). Residues 1538-1547 (LPLSDTSPKP) are compositionally biased toward low complexity. A compositionally biased stretch (basic and acidic residues) spans 1665-1694 (SQKDPARVEKEEKQGKAEEGTPTSKRGEPA). C2H2-type zinc fingers lie at residues 1720-1742 (YVCEECGIRCKKPSMLKKHIRTH) and 1748-1772 (YVCKHCHFAFKTKGNLTKHMKSKAH). Residues 1720–1772 (YVCEECGIRCKKPSMLKKHIRTHTDVRPYVCKHCHFAFKTKGNLTKHMKSKAH) are ZAS2. An acidic 3 region spans residues 1783-1841 (EELEAEEGTSDDLHQDSEGQEGAEAVEEHQFSDLEDSDSDSDLDEDEEEEEEEEESQDE). Disordered stretches follow at residues 1786–1990 (EAEE…HLCG) and 2009–2038 (PAGLERATDTGTPRYSPTRRWSLGQAESPP). Positions 1815 to 1840 (DLEDSDSDSDLDEDEEEEEEEEESQD) are enriched in acidic residues. Residues 1871–1902 (PDSTSDEVPQGSSISEATHLTASSCSTPSRGT) show a composition bias toward polar residues. Repeat copies occupy residues 1897 to 1900 (TPSR), 1927 to 1930 (SPRR), 1933 to 1936 (SPSK), 1961 to 1964 (SPAR), and 2024 to 2027 (SPTR). Over residues 1952–1961 (KNDSSPQQCS) the composition is skewed to polar residues. Residues 2053–2148 (SPSADKSGLG…QLLSRAPCPL (96 aa)) are 5 X 4 AA tandem repeats of [ST]-P-X-[RK]. Disordered stretches follow at residues 2184-2265 (SDLT…QGHQ) and 2284-2348 (KASS…PPSI). Low complexity predominate over residues 2203 to 2216 (SPSASVSPVAKVSK). Residues 2293-2314 (RSSSMDCLAETSTYSPPRSRNL) show a composition bias toward polar residues.

In terms of assembly, interacts with TRAF1 and TRAF2 as well as with JUN. Forms a multimeric complex with RUNX2 and E3 ubiquitin ligase WWP1. Phosphorylated on threonine and serine residues. Phosphorylation by cyclin-dependent kinase CDK1 decreases HIVEP3 DNA binding affinity, and by epidermal growth factor receptor kinase increases its DNA binding affinity. As to expression, expressed in macrophages, lymphocytes, brain, thymus, spleen and bone marrow. Expressed in osteoblasts, whole bone and, to a lesser extent, in osteoclasts.

The protein resides in the cytoplasm. The protein localises to the nucleus. In terms of biological role, plays a role of transcription factor; binds to recognition signal sequences (Rss heptamer) for somatic recombination of immunoglobulin and T-cell receptor gene segments; Also binds to the kappa-B motif of gene such as S100A4, involved in cell progression and differentiation. Kappa-B motif is a gene regulatory element found in promoters and enhancers of genes involved in immunity, inflammation, and growth and that responds to viral antigens, mitogens, and cytokines. Involvement of HIVEP3 in cell growth is strengthened by the fact that its down-regulation promotes cell cycle progression with ultimate formation of multinucleated giant cells. Strongly inhibits TNF-alpha-induced NF-kappa-B activation; Interferes with nuclear factor NF-kappa-B by several mechanisms: as transcription factor, by competing for Kappa-B motif and by repressing transcription in the nucleus; through a non transcriptional process, by inhibiting nuclear translocation of RELA by association with TRAF2, an adapter molecule in the tumor necrosis factor signaling, which blocks the formation of IKK complex. Interaction with TRAF proteins inhibits both NF-Kappa-B-mediated and c-Jun N-terminal kinase/JNK-mediated responses that include apoptosis and pro-inflammatory cytokine gene expression. Positively regulates the expression of IL2 in T-cell. Essential regulator of adult bone formation. The chain is Transcription factor HIVEP3 (Hivep3) from Mus musculus (Mouse).